The primary structure comprises 153 residues: Large ribosomal subunit protein uL30 (153 aa).

Belongs to the universal ribosomal protein uL30 family. As to quaternary structure, part of the 50S ribosomal subunit.

This Methanosarcina acetivorans (strain ATCC 35395 / DSM 2834 / JCM 12185 / C2A) protein is Large ribosomal subunit protein uL30.